Consider the following 93-residue polypeptide: MSRSLRKGPFIDLHLLRKVEKVIKTGDKKPIRTWSRRSTIFPKMIGLTISVHNGKQHIPVFISDEMVGHKLGEFAPTRTYRGHSVDKKIKKRY.

The protein belongs to the universal ribosomal protein uS19 family.

Its function is as follows. Protein S19 forms a complex with S13 that binds strongly to the 16S ribosomal RNA. The chain is Small ribosomal subunit protein uS19 from Blochmanniella floridana.